Consider the following 275-residue polypeptide: Large ribosomal subunit protein uL2 (275 aa).

A disordered region spans residues 223–275 (VVMNPVDHPHGGGEGKSSGGRHPVSPWGMPTKGYKTRKNKGTDQYIVRRRNKK).

This sequence belongs to the universal ribosomal protein uL2 family. In terms of assembly, part of the 50S ribosomal subunit. Forms a bridge to the 30S subunit in the 70S ribosome.

Its function is as follows. One of the primary rRNA binding proteins. Required for association of the 30S and 50S subunits to form the 70S ribosome, for tRNA binding and peptide bond formation. It has been suggested to have peptidyltransferase activity; this is somewhat controversial. Makes several contacts with the 16S rRNA in the 70S ribosome. The polypeptide is Large ribosomal subunit protein uL2 (Psychromonas ingrahamii (strain DSM 17664 / CCUG 51855 / 37)).